A 30-amino-acid polypeptide reads, in one-letter code: MTDAQVFTILAIALVPAVMAALLGSALARS.

A helical transmembrane segment spans residues 6–26 (VFTILAIALVPAVMAALLGSA).

The protein belongs to the PsaM family.

It localises to the cellular thylakoid membrane. The sequence is that of Photosystem I reaction center subunit XII from Synechococcus sp. (strain JA-3-3Ab) (Cyanobacteria bacterium Yellowstone A-Prime).